A 492-amino-acid chain; its full sequence is Transmembrane protein 39B (492 aa).

Residues 1-53 (MGGRRGPNRTSYYRNPLCEPGSSGASGGGHSSSASVSSVRSRSRTTSGTGLSS) form a disordered region. N-linked (GlcNAc...) asparagine glycosylation occurs at Asn8. Residues 31-53 (SSSASVSSVRSRSRTTSGTGLSS) are compositionally biased toward low complexity. A run of 8 helical transmembrane segments spans residues 77-97 (SILFELQLFFCQLIALFVHYI), 115-135 (TSLNFHLIDFNLLMVTTIVLG), 153-175 (SLFRSILLFLTRFTVLTATGWSL), 185-205 (TYSFLNLLFLCYPFGMYIPFL), 288-308 (EVLVSSMLSAYYVAFVPVWFV), 322-342 (LFLLVSISTSVILMQHLLPAS), 421-441 (ILNILLLLEGAVIVYQLYSLM), and 447-467 (HQTISLALILFSNYYAFFKLL).

The protein belongs to the TMEM39 family.

The protein resides in the endoplasmic reticulum membrane. In terms of biological role, may protect the cells against DNA damage caused by exposure to the cold-warming stress and facilitates tissue damage repair during the recovery phase. The sequence is that of Transmembrane protein 39B from Rattus norvegicus (Rat).